Here is a 157-residue protein sequence, read N- to C-terminus: 2-C-methyl-D-erythritol 2,4-cyclodiphosphate synthase (157 aa).

A divalent metal cation is bound by residues Asp-8 and His-10. 4-CDP-2-C-methyl-D-erythritol 2-phosphate is bound by residues 8–10 (DIH) and 34–35 (HS). His-42 contributes to the a divalent metal cation binding site. 4-CDP-2-C-methyl-D-erythritol 2-phosphate is bound by residues 56–58 (DIG) and 132–135 (TTNE).

Belongs to the IspF family. As to quaternary structure, homotrimer. A divalent metal cation serves as cofactor.

It carries out the reaction 4-CDP-2-C-methyl-D-erythritol 2-phosphate = 2-C-methyl-D-erythritol 2,4-cyclic diphosphate + CMP. The protein operates within isoprenoid biosynthesis; isopentenyl diphosphate biosynthesis via DXP pathway; isopentenyl diphosphate from 1-deoxy-D-xylulose 5-phosphate: step 4/6. Its function is as follows. Involved in the biosynthesis of isopentenyl diphosphate (IPP) and dimethylallyl diphosphate (DMAPP), two major building blocks of isoprenoid compounds. Catalyzes the conversion of 4-diphosphocytidyl-2-C-methyl-D-erythritol 2-phosphate (CDP-ME2P) to 2-C-methyl-D-erythritol 2,4-cyclodiphosphate (ME-CPP) with a corresponding release of cytidine 5-monophosphate (CMP). In Synechococcus sp. (strain JA-3-3Ab) (Cyanobacteria bacterium Yellowstone A-Prime), this protein is 2-C-methyl-D-erythritol 2,4-cyclodiphosphate synthase.